The chain runs to 859 residues: DNA mismatch repair protein MutS (859 aa).

617 to 624 (GPNMGGKS) lines the ATP pocket. Residues 801-820 (TSLPHEVAPQAPGKPSVPQQ) are disordered.

It belongs to the DNA mismatch repair MutS family.

Functionally, this protein is involved in the repair of mismatches in DNA. It is possible that it carries out the mismatch recognition step. This protein has a weak ATPase activity. The chain is DNA mismatch repair protein MutS from Pseudomonas fluorescens (strain ATCC BAA-477 / NRRL B-23932 / Pf-5).